Reading from the N-terminus, the 315-residue chain is ATP synthase gamma chain (315 aa).

This sequence belongs to the ATPase gamma chain family. As to quaternary structure, F-type ATPases have 2 components, CF(1) - the catalytic core - and CF(0) - the membrane proton channel. CF(1) has five subunits: alpha(3), beta(3), gamma(1), delta(1), epsilon(1). CF(0) has three main subunits: a, b and c.

The protein resides in the cellular thylakoid membrane. Produces ATP from ADP in the presence of a proton gradient across the membrane. The gamma chain is believed to be important in regulating ATPase activity and the flow of protons through the CF(0) complex. This Trichormus variabilis (strain ATCC 29413 / PCC 7937) (Anabaena variabilis) protein is ATP synthase gamma chain.